A 457-amino-acid chain; its full sequence is D-inositol 3-phosphate glycosyltransferase (457 aa).

Residue H34 participates in 1D-myo-inositol 3-phosphate binding. UDP-N-acetyl-alpha-D-glucosamine-binding positions include 40–41 (QP) and G48. 1D-myo-inositol 3-phosphate is bound by residues 45–50 (DAGGMN), K103, Y136, T160, and R180. 3 residues coordinate UDP-N-acetyl-alpha-D-glucosamine: R267, K272, and V333. 3 residues coordinate Mg(2+): F342, R343, and A345. Positions 355 and 363 each coordinate UDP-N-acetyl-alpha-D-glucosamine. T369 contacts Mg(2+).

This sequence belongs to the glycosyltransferase group 1 family. MshA subfamily. Homodimer.

It catalyses the reaction 1D-myo-inositol 3-phosphate + UDP-N-acetyl-alpha-D-glucosamine = 1D-myo-inositol 2-acetamido-2-deoxy-alpha-D-glucopyranoside 3-phosphate + UDP + H(+). Catalyzes the transfer of a N-acetyl-glucosamine moiety to 1D-myo-inositol 3-phosphate to produce 1D-myo-inositol 2-acetamido-2-deoxy-glucopyranoside 3-phosphate in the mycothiol biosynthesis pathway. In Streptomyces coelicolor (strain ATCC BAA-471 / A3(2) / M145), this protein is D-inositol 3-phosphate glycosyltransferase.